Here is a 435-residue protein sequence, read N- to C-terminus: 3-ketoacyl-CoA thiolase (435 aa).

Catalysis depends on cysteine 98, which acts as the Acyl-thioester intermediate. Catalysis depends on proton acceptor residues histidine 391 and cysteine 421.

Belongs to the thiolase-like superfamily. Thiolase family. As to quaternary structure, heterotetramer of two alpha chains (FadJ) and two beta chains (FadI).

The protein localises to the cytoplasm. It catalyses the reaction an acyl-CoA + acetyl-CoA = a 3-oxoacyl-CoA + CoA. The protein operates within lipid metabolism; fatty acid beta-oxidation. Functionally, catalyzes the final step of fatty acid oxidation in which acetyl-CoA is released and the CoA ester of a fatty acid two carbons shorter is formed. This Vibrio cholerae serotype O1 (strain ATCC 39315 / El Tor Inaba N16961) protein is 3-ketoacyl-CoA thiolase.